The following is a 129-amino-acid chain: Glycine cleavage system H protein 2 (129 aa).

The 82-residue stretch at 24-105 (SVTVGISDHA…PYVSWFFKLK (82 aa)) folds into the Lipoyl-binding domain. K65 is subject to N6-lipoyllysine.

The protein belongs to the GcvH family. As to quaternary structure, the glycine cleavage system is composed of four proteins: P, T, L and H. (R)-lipoate is required as a cofactor.

Its function is as follows. The glycine cleavage system catalyzes the degradation of glycine. The H protein shuttles the methylamine group of glycine from the P protein to the T protein. The sequence is that of Glycine cleavage system H protein 2 from Pseudomonas aeruginosa (strain ATCC 15692 / DSM 22644 / CIP 104116 / JCM 14847 / LMG 12228 / 1C / PRS 101 / PAO1).